The primary structure comprises 262 residues: Phosphatidylglycerol--prolipoprotein diacylglyceryl transferase (262 aa).

The next 3 membrane-spanning stretches (helical) occupy residues Leu17–Ala37, Leu57–Tyr77, and Ile92–Ala112. Arg140 serves as a coordination point for a 1,2-diacyl-sn-glycero-3-phospho-(1'-sn-glycerol). The next 2 helical transmembrane spans lie at Met200 to Val220 and Trp234 to Ala254.

It belongs to the Lgt family.

The protein resides in the cell inner membrane. The enzyme catalyses L-cysteinyl-[prolipoprotein] + a 1,2-diacyl-sn-glycero-3-phospho-(1'-sn-glycerol) = an S-1,2-diacyl-sn-glyceryl-L-cysteinyl-[prolipoprotein] + sn-glycerol 1-phosphate + H(+). It participates in protein modification; lipoprotein biosynthesis (diacylglyceryl transfer). Its function is as follows. Catalyzes the transfer of the diacylglyceryl group from phosphatidylglycerol to the sulfhydryl group of the N-terminal cysteine of a prolipoprotein, the first step in the formation of mature lipoproteins. The sequence is that of Phosphatidylglycerol--prolipoprotein diacylglyceryl transferase from Methylococcus capsulatus (strain ATCC 33009 / NCIMB 11132 / Bath).